A 37-amino-acid polypeptide reads, in one-letter code: Large ribosomal subunit protein bL36 (37 aa).

Belongs to the bacterial ribosomal protein bL36 family.

The sequence is that of Large ribosomal subunit protein bL36 from Francisella tularensis subsp. tularensis (strain FSC 198).